A 237-amino-acid chain; its full sequence is 1-(5-phosphoribosyl)-5-[(5-phosphoribosylamino)methylideneamino] imidazole-4-carboxamide isomerase (237 aa).

D8 serves as the catalytic Proton acceptor. The active-site Proton donor is the D127.

The protein belongs to the HisA/HisF family.

The protein resides in the cytoplasm. The catalysed reaction is 1-(5-phospho-beta-D-ribosyl)-5-[(5-phospho-beta-D-ribosylamino)methylideneamino]imidazole-4-carboxamide = 5-[(5-phospho-1-deoxy-D-ribulos-1-ylimino)methylamino]-1-(5-phospho-beta-D-ribosyl)imidazole-4-carboxamide. It functions in the pathway amino-acid biosynthesis; L-histidine biosynthesis; L-histidine from 5-phospho-alpha-D-ribose 1-diphosphate: step 4/9. In Sulfurovum sp. (strain NBC37-1), this protein is 1-(5-phosphoribosyl)-5-[(5-phosphoribosylamino)methylideneamino] imidazole-4-carboxamide isomerase.